The following is a 782-amino-acid chain: MKISSGAINFSTIPNQVKKLITSIREHTKNGLASKITSVKNTHTSLNEKFKTGKDSPIEFALPQKIKDFFQPKDKNTLNKTLITVKNIKDTNNAGKKNISAEDVSKMNAAFMRKHIANQTCDYNYRMTGAAPLPGGVSVSANNRPTVSEGRTPPVSPSLSLQATSSPSSPADWAKKLTDAVLRQKAGETLTAADRDFSNADFRNITFSKILPPSFMERDGDIIKGFNFSNSKFTYSDISHLHFDECRFTYSTLSDVVCSNTKFSNSDMNEVVLQYSITTQQQPSFIDTTLKNTLIRHKANLSGVILNEPDNSSPPSVSGGGNFIRLGDIWLQMPLLWTENAVDGFLNHEHNNGKSILMTIDSLPDKYSQEKVQAMEDLVKSLRGGRLTEACIRPVESSLVSVLAHPPYTQSALIREWLGPVQERFFAHQCQTYNDVPLPTPDTYYQQRILPVLLDSFDRNSAAMTTHSGLFNQVILHCMTGVDCTDGTRQKAAALYEQYLAHPAVSPHIHNGLFGNYDGSSDWTTRAADNFLLLSSQDSDTAMMLSTDTLLTMLNPTPDTAWDNFYLLRAGENVSTAQISPVELFRHDFPVFLAAFNQQATQRRFGELIDIILSTEEHGELNQQFIAATNQKHSTVKLIDDASVSRLATIFAPLLPEGKLSPAHYQHILSAYHLTDATPQKQAETLFCLSTAFARYSSSAIFGTEHDSPPALRGYAEALMQKAWELSPAIFPSSEQFTDWSDRFHGLHGAFTCTSVVADSMQRHARKYFPSVLSSILPLSWA.

The tract at residues 137 to 171 (VSVSANNRPTVSEGRTPPVSPSLSLQATSSPSSPA) is disordered. Low complexity predominate over residues 157-171 (PSLSLQATSSPSSPA). The active-site Glycyl thioester intermediate is the Cys-753.

This sequence belongs to the SopA E3 ligase family. In terms of processing, ubiquitinated in the presence of host E1 ubiquitin-activating enzyme, E2 ubiquitin-conjugating enzyme and ubiquitin.

It is found in the secreted. The protein resides in the host cell. The enzyme catalyses S-ubiquitinyl-[E2 ubiquitin-conjugating enzyme]-L-cysteine + [acceptor protein]-L-lysine = [E2 ubiquitin-conjugating enzyme]-L-cysteine + N(6)-ubiquitinyl-[acceptor protein]-L-lysine.. Effector proteins function to alter host cell physiology and promote bacterial survival in host tissues. This protein is an E3 ubiquitin ligase that interferes with host's ubiquitination pathway. In Salmonella dublin (strain CT_02021853), this protein is E3 ubiquitin-protein ligase SopA (sopA).